We begin with the raw amino-acid sequence, 176 residues long: Nuclear transcription factor Y subunit B-10 (176 aa).

Residues 1–15 (MAESQTGGGGGGSHE) show a composition bias toward gly residues. The segment at 1-29 (MAESQTGGGGGGSHESGGDQSPRSLNVRE) is disordered. The residue at position 2 (A2) is an N-acetylalanine. Residues 34-40 (LPIANIS) mediate DNA binding. The segment at 61–72 (MQECVSEFISFV) is subunit association domain (SAD). Residues 121–176 (GDTKGSGKGGESSAKRDGQPSQVSQFSQVPQQGSFSQGPYGNSQGSNMMVQMPGTE) are disordered. The segment covering 139–159 (QPSQVSQFSQVPQQGSFSQGP) has biased composition (low complexity). Over residues 160-169 (YGNSQGSNMM) the composition is skewed to polar residues.

The protein belongs to the NFYB/HAP3 subunit family. In terms of assembly, heterotrimeric transcription factor composed of three components, NF-YA, NF-YB and NF-YC. NF-YB and NF-YC must interact and dimerize for NF-YA association and DNA binding. As to expression, expressed in the whole plant, except roots.

It is found in the nucleus. Functionally, component of the NF-Y/HAP transcription factor complex. The NF-Y complex stimulates the transcription of various genes by recognizing and binding to a CCAAT motif in promoters. The sequence is that of Nuclear transcription factor Y subunit B-10 (NFYB10) from Arabidopsis thaliana (Mouse-ear cress).